A 486-amino-acid polypeptide reads, in one-letter code: MTNKSNKILNTNITKLVNQPYKYGFSTVIEKDIIEKGLNEDVICLISKKKNEPKFLLEFRLKAFKKWKEMKCPDWAQIKFSEIDYQDIIYYSAPKVKKKLNSLDEVDPELLKTFEKLGISLTEQKRLANVAIDAVFDSVSIATTFKEELAECGVIFSSISEAIQEYPELIEKYLGSVVPIGDNYFSALNSAVFTDGSFCYIPKDTICPLELSTYFRINDQKSGQFERTLIVAEKNSQVSYLEGCTAPQYDSNQLHAAVVELVALENADIKYSTVQNWYAGNNYGEGGIYNFVTKRGLCAGSNSKISWTQVETGSNITWKYPSCLLVGDKAKGEFYSVALTNNYQQADTGSKMIHVGKNTRSRIVSKGISAGNSKNTYRGLVNISNKAIGARNYSQCDSLLIGNLSNANTFPFISVQNPTAKIEHEASTSKIGEEQIFYFLQRGIPIEKGVELMISGFCQEVFTELPLEFAAEADRLLTLKLEGSVG.

Belongs to the iron-sulfur cluster assembly SufBD family.

The protein localises to the plastid. It localises to the chloroplast. This chain is Iron-sulfur cluster assembly SufBD family protein ycf24 (ycf24), found in Trieres chinensis (Marine centric diatom).